A 238-amino-acid chain; its full sequence is tRNA (guanine-N(7)-)-methyltransferase (238 aa).

Residues Glu68, Glu93, Asp120, and Asp143 each coordinate S-adenosyl-L-methionine. Residue Asp143 is part of the active site. Residues Lys147, Asp179, and 216-219 contribute to the substrate site; that span reads TKFE.

It belongs to the class I-like SAM-binding methyltransferase superfamily. TrmB family.

The enzyme catalyses guanosine(46) in tRNA + S-adenosyl-L-methionine = N(7)-methylguanosine(46) in tRNA + S-adenosyl-L-homocysteine. It functions in the pathway tRNA modification; N(7)-methylguanine-tRNA biosynthesis. Functionally, catalyzes the formation of N(7)-methylguanine at position 46 (m7G46) in tRNA. This Shewanella frigidimarina (strain NCIMB 400) protein is tRNA (guanine-N(7)-)-methyltransferase.